Consider the following 874-residue polypeptide: Leucine--tRNA ligase (874 aa).

Positions 43–53 (PYPSGRIHIGH) match the 'HIGH' region motif. The 'KMSKS' region signature appears at 630-634 (KMSKS). Lys633 is an ATP binding site.

It belongs to the class-I aminoacyl-tRNA synthetase family.

The protein localises to the cytoplasm. It catalyses the reaction tRNA(Leu) + L-leucine + ATP = L-leucyl-tRNA(Leu) + AMP + diphosphate. This is Leucine--tRNA ligase from Bradyrhizobium sp. (strain BTAi1 / ATCC BAA-1182).